The primary structure comprises 314 residues: tRNA pseudouridine synthase B (314 aa).

Residue His43 coordinates substrate. The active-site Nucleophile is the Asp48. Residues Tyr76, Tyr179, and Leu200 each contribute to the substrate site.

The protein belongs to the pseudouridine synthase TruB family. Type 1 subfamily.

It carries out the reaction uridine(55) in tRNA = pseudouridine(55) in tRNA. Responsible for synthesis of pseudouridine from uracil-55 in the psi GC loop of transfer RNAs. The chain is tRNA pseudouridine synthase B from Salmonella arizonae (strain ATCC BAA-731 / CDC346-86 / RSK2980).